The primary structure comprises 108 residues: Phosphoribosyl-AMP cyclohydrolase (108 aa).

Asp72 serves as a coordination point for Mg(2+). Position 73 (Cys73) interacts with Zn(2+). Mg(2+)-binding residues include Asp74 and Asp76. Residues Cys89 and Cys96 each contribute to the Zn(2+) site.

The protein belongs to the PRA-CH family. Homodimer. It depends on Mg(2+) as a cofactor. Zn(2+) serves as cofactor.

The protein resides in the cytoplasm. The catalysed reaction is 1-(5-phospho-beta-D-ribosyl)-5'-AMP + H2O = 1-(5-phospho-beta-D-ribosyl)-5-[(5-phospho-beta-D-ribosylamino)methylideneamino]imidazole-4-carboxamide. It participates in amino-acid biosynthesis; L-histidine biosynthesis; L-histidine from 5-phospho-alpha-D-ribose 1-diphosphate: step 3/9. Functionally, catalyzes the hydrolysis of the adenine ring of phosphoribosyl-AMP. The protein is Phosphoribosyl-AMP cyclohydrolase of Archaeoglobus fulgidus (strain ATCC 49558 / DSM 4304 / JCM 9628 / NBRC 100126 / VC-16).